The chain runs to 224 residues: Ribonuclease HII (224 aa).

In terms of domain architecture, RNase H type-2 spans 36–224; sequence RGVAGVDEVG…RRSFLRRFLG (189 aa). Positions 42, 43, and 138 each coordinate a divalent metal cation.

This sequence belongs to the RNase HII family. Requires Mn(2+) as cofactor. Mg(2+) serves as cofactor.

The protein resides in the cytoplasm. It catalyses the reaction Endonucleolytic cleavage to 5'-phosphomonoester.. Its function is as follows. Endonuclease that specifically degrades the RNA of RNA-DNA hybrids. The protein is Ribonuclease HII of Parasynechococcus marenigrum (strain WH8102).